The primary structure comprises 264 residues: Thymidylate synthase (264 aa).

DUMP is bound at residue arginine 21. Histidine 51 lines the (6R)-5,10-methylene-5,6,7,8-tetrahydrofolate pocket. 126 to 127 serves as a coordination point for dUMP; it reads RR. Catalysis depends on cysteine 146, which acts as the Nucleophile. Residues 166-169, asparagine 177, and 207-209 each bind dUMP; these read RSAD and HLY. Aspartate 169 is a (6R)-5,10-methylene-5,6,7,8-tetrahydrofolate binding site. Alanine 263 is a binding site for (6R)-5,10-methylene-5,6,7,8-tetrahydrofolate.

The protein belongs to the thymidylate synthase family. Bacterial-type ThyA subfamily. Homodimer.

The protein resides in the cytoplasm. It carries out the reaction dUMP + (6R)-5,10-methylene-5,6,7,8-tetrahydrofolate = 7,8-dihydrofolate + dTMP. It participates in pyrimidine metabolism; dTTP biosynthesis. Catalyzes the reductive methylation of 2'-deoxyuridine-5'-monophosphate (dUMP) to 2'-deoxythymidine-5'-monophosphate (dTMP) while utilizing 5,10-methylenetetrahydrofolate (mTHF) as the methyl donor and reductant in the reaction, yielding dihydrofolate (DHF) as a by-product. This enzymatic reaction provides an intracellular de novo source of dTMP, an essential precursor for DNA biosynthesis. The sequence is that of Thymidylate synthase from Alkalilimnicola ehrlichii (strain ATCC BAA-1101 / DSM 17681 / MLHE-1).